The following is a 138-amino-acid chain: Biopolymer transport protein exbD1 (138 aa).

The Cytoplasmic segment spans residues 1-16 (MIKSSAKHNDFGLTPD). A helical transmembrane segment spans residues 17 to 37 (LTPLLDIIFIVMVFLLLTASV). The Periplasmic segment spans residues 38-138 (RLESLEVALP…TQLLTEPSHS (101 aa)).

Belongs to the ExbD/TolR family. In terms of assembly, the accessory proteins ExbB and ExbD seem to form a complex with TonB.

The protein resides in the cell inner membrane. In terms of biological role, involved in the TonB-dependent energy-dependent transport of various receptor-bound substrates. The polypeptide is Biopolymer transport protein exbD1 (exbD1) (Vibrio cholerae serotype O1 (strain ATCC 39315 / El Tor Inaba N16961)).